Reading from the N-terminus, the 579-residue chain is Laccase-24 (579 aa).

The signal sequence occupies residues 1-23; it reads MARSWSLLLLPFALALVASVAQA. Plastocyanin-like domains lie at 31–148 and 159–322; these read NVGN…PRGG and EEVV…YGGG. N-linked (GlcNAc...) asparagine glycosylation is found at asparagine 34 and asparagine 78. Cu cation contacts are provided by histidine 82 and histidine 84. 2 N-linked (GlcNAc...) asparagine glycosylation sites follow: asparagine 110 and asparagine 116. The Cu cation site is built by histidine 127 and histidine 129. N-linked (GlcNAc...) asparagine glycans are attached at residues asparagine 204, asparagine 209, asparagine 219, asparagine 241, asparagine 312, asparagine 337, asparagine 348, asparagine 398, asparagine 405, asparagine 444, and asparagine 462. The Plastocyanin-like 3 domain occupies 425 to 563; the sequence is DFPDTPPIVF…GMVFEVQNGP (139 aa). Histidine 480, histidine 483, and histidine 485 together coordinate Cu cation. An N-linked (GlcNAc...) asparagine glycan is attached at asparagine 500. Positions 542, 543, 544, and 548 each coordinate Cu cation.

It belongs to the multicopper oxidase family. Requires Cu cation as cofactor.

It is found in the secreted. It localises to the extracellular space. Its subcellular location is the apoplast. The catalysed reaction is 4 hydroquinone + O2 = 4 benzosemiquinone + 2 H2O. Lignin degradation and detoxification of lignin-derived products. The chain is Laccase-24 (LAC24) from Oryza sativa subsp. japonica (Rice).